A 37-amino-acid polypeptide reads, in one-letter code: Large ribosomal subunit protein bL36 (37 aa).

The protein belongs to the bacterial ribosomal protein bL36 family.

The chain is Large ribosomal subunit protein bL36 from Janthinobacterium sp. (strain Marseille) (Minibacterium massiliensis).